A 732-amino-acid chain; its full sequence is Lanosterol synthase (732 aa).

Thr2 carries the N-acetylthreonine modification. 7 PFTB repeats span residues 77–121 (ALNG…PLPA), 124–165 (REEI…RILG), 424–468 (PDNP…LLLQ), 483–528 (LCDA…MIDY), 560–600 (LTQG…ACMG), 612–653 (VSRA…HNTC), and 670–712 (QERG…NIFP). Asp455 serves as the catalytic Proton donor.

It belongs to the terpene cyclase/mutase family. As to quaternary structure, monomer. As to expression, widely expressed. Expressed in the hair bulb, the outer root sheath and hair matrix of the hair follicle epithelium. Also detected in dermal papilla, epidermis, sweat glands, sebaceous glands, and blood vessels.

Its subcellular location is the endoplasmic reticulum membrane. It carries out the reaction (S)-2,3-epoxysqualene = lanosterol. It functions in the pathway terpene metabolism; lanosterol biosynthesis; lanosterol from farnesyl diphosphate: step 3/3. Key enzyme in the cholesterol biosynthesis pathway. Catalyzes the cyclization of (S)-2,3 oxidosqualene to lanosterol, a reaction that forms the sterol nucleus. Through the production of lanosterol may regulate lens protein aggregation and increase transparency. This chain is Lanosterol synthase (LSS), found in Homo sapiens (Human).